Reading from the N-terminus, the 418-residue chain is Protein SSXT (418 aa).

The residue at position 2 (serine 2) is an N-acetylserine. Residues 2–186 (SVAFAAPRQR…NQMTMSQGQP (185 aa)) are transcriptional activation. Positions 50–53 (YQQM) match the SH2-binding motif. Disordered regions lie at residues 77-118 (APPT…PAPH) and 188-418 (GNYG…NYQQ). The segment covering 225-251 (YQGQQPPMGMMGQVNQGNHMMGQRQIP) has biased composition (low complexity). Over residues 309–318 (GYDRPYEDSS) the composition is skewed to basic and acidic residues. Composition is skewed to low complexity over residues 328–337 (QYGQQQDAYQ), 345–366 (YPPQ…QGYG), and 376–393 (YPNY…YRPT). 2 repeat units span residues 344–356 (GYPP…PGQQ) and 357–369 (GYPG…GPSQ). A 2 X 13 AA imperfect tandem repeats region spans residues 344–369 (GYPPQQQQYPGQQGYPGQQQGYGPSQ). The short motif at 374-377 (PQYP) is the SH2-binding element. Positions 392 to 401 (PTQPGPPQPP) match the SH3-binding motif. A compositionally biased stretch (pro residues) spans 394-403 (QPGPPQPPQQ). Low complexity predominate over residues 404–418 (RPYGYDQGQYGNYQQ). Residues 413–416 (YGNY) carry the SH2-binding motif.

The protein belongs to the SS18 family. Interacts with MLLT10. Isoform 1 interacts with RBM14 isoform 1. Isoform 2 interacts with RBM14 isoform 1. Component of the multiprotein chromatin-remodeling complexes SWI/SNF: SWI/SNF-A (BAF), SWI/SNF-B (PBAF) and related complexes. The canonical complex contains a catalytic subunit (either SMARCA4/BRG1/BAF190A or SMARCA2/BRM/BAF190B) and at least SMARCE1, ACTL6A/BAF53, SMARCC1/BAF155, SMARCC2/BAF170, and SMARCB1/SNF5/BAF47. Other subunits specific to each of the complexes may also be present permitting several possible combinations developmentally and tissue specific. Component of the SWI/SNF (GBAF) subcomplex, which includes at least BICRA or BICRAL (mutually exclusive), BRD9, SS18, the core BAF subunits, SMARCA2/BRM, SMARCA4/BRG1/BAF190A, ACTL6A/BAF53, SMARCC1/BAF155, and SMARCD1/BAF60A. In terms of tissue distribution, fairly ubiquitously expressed. Expressed in synovial sarcomas and in other human cell lines. The fusion genes SSXT-SSX1 and SSXT-SSX2 are expressed only in synovial sarcomas.

It is found in the nucleus. Its function is as follows. Appears to function synergistically with RBM14 as a transcriptional coactivator. Isoform 1 and isoform 2 function in nuclear receptor coactivation. Isoform 1 and isoform 2 function in general transcriptional coactivation. Component of SWI/SNF chromatin remodeling subcomplex GBAF that carries out key enzymatic activities, changing chromatin structure by altering DNA-histone contacts within a nucleosome in an ATP-dependent manner. In Homo sapiens (Human), this protein is Protein SSXT (SS18).